The sequence spans 553 residues: MANPEIVISSCSSHEEENRCNFNQHTSPSEELLLEDQMRRKLKFFFMNPCEKFWARGRKPWKLAIQILKIAMVTIQLVLFGLSNQMVVAFKEENTVAFKHLFLKGYIDRMDDTYAVYTQSDVYDQIIFAVNQYLQLYNVSVGNHAYENKGTDQSAMAICQHFYKRGNIYPGNDTFDIDPEIETDCFFVEPDEPFHIGTPAENKLNLTLDFHRLLTVELQFKLKAINLQTVRHQELPDCYDFTLTITFDNKAHSGRIKISLDNDISIRECKDWHVSGSIQKNTHNMMIFDAFVILTCLVSLILCIRSVISGLQLQQEFVNFFLLHYKKDVSVSDQMEFVNGWYIMIIISDILTIIGSILKMEIQAKSLTSYDVCSILLGTSTMLVWLGVIRYLGFFAKYNLLILTLQAALPNVIRFCCCAAMIYLGYCFCGWIVLGPYHNKFRSLNMVSECLFSLINGDDMFATFAKMQQKSYLVWLFSRIYLYSFISLFIYMILSLFIALITDTYETIKHYQQDGFPETELRTFISECKDLPNSGKFRLEDDPPVSLFCCCKK.

Residues 1 to 62 (MANPEIVISS…FWARGRKPWK (62 aa)) lie on the Cytoplasmic side of the membrane. The interaction with phosphoinositides stretch occupies residues 52–62 (KFWARGRKPWK). The chain crosses the membrane as a helical span at residues 63 to 83 (LAIQILKIAMVTIQLVLFGLS). Over 84 to 283 (NQMVVAFKEE…VSGSIQKNTH (200 aa)) the chain is Extracellular. The extracellular/lumenal pore loop stretch occupies residues 104-118 (KGYIDRMDDTYAVYT). N-linked (GlcNAc...) asparagine glycosylation is present at Asn138. Cys159 and Cys185 are oxidised to a cystine. Asn205 is a glycosylation site (N-linked (GlcNAc...) asparagine). Residues Cys238 and Cys269 are joined by a disulfide bond. The helical transmembrane segment at 284 to 304 (NMMIFDAFVILTCLVSLILCI) threads the bilayer. Residues 305–341 (RSVISGLQLQQEFVNFFLLHYKKDVSVSDQMEFVNGW) lie on the Cytoplasmic side of the membrane. The chain crosses the membrane as a helical span at residues 342–362 (YIMIIISDILTIIGSILKMEI). Residues 363 to 371 (QAKSLTSYD) are Extracellular-facing. A helical membrane pass occupies residues 372–392 (VCSILLGTSTMLVWLGVIRYL). The Cytoplasmic portion of the chain corresponds to 393–414 (GFFAKYNLLILTLQAALPNVIR). A helical transmembrane segment spans residues 415 to 435 (FCCCAAMIYLGYCFCGWIVLG). Residues 436-443 (PYHNKFRS) lie on the Extracellular side of the membrane. The segment at residues 444-464 (LNMVSECLFSLINGDDMFATF) is an intramembrane region (pore-forming). The Selectivity filter motif lies at 456-459 (NGDD). Residues 465 to 475 (AKMQQKSYLVW) lie on the Extracellular side of the membrane. Residues 476-497 (LFSRIYLYSFISLFIYMILSLF) traverse the membrane as a helical segment. The Cytoplasmic segment spans residues 498-553 (IALITDTYETIKHYQQDGFPETELRTFISECKDLPNSGKFRLEDDPPVSLFCCCKK).

Belongs to the transient receptor (TC 1.A.4) family. Polycystin subfamily. MCOLN3 sub-subfamily. In terms of assembly, homotetramer. Can heterooligomerize with MCOLN1; heteromeric assemblies have different channel properties as compared to the respective homooligomers and may be tissue-specific. May heterooligomerize with TRPV5 to form a functional distinct ion channel. Interacts with GABARAPL2. N-glycosylated.

The protein resides in the lysosome membrane. Its subcellular location is the early endosome membrane. The protein localises to the late endosome membrane. It is found in the cytoplasmic vesicle. It localises to the autophagosome membrane. The protein resides in the cell projection. Its subcellular location is the stereocilium membrane. It catalyses the reaction Ca(2+)(in) = Ca(2+)(out). The catalysed reaction is Mg(2+)(in) = Mg(2+)(out). The enzyme catalyses K(+)(in) = K(+)(out). It carries out the reaction Na(+)(in) = Na(+)(out). With respect to regulation, channel activity is activated by PtdIns(3,5)P2 (phosphatidylinositol 3,5-bisphosphate). Inhibited by lumenal H(+) and Na(+). The channel pore shows dynamic behavior and undergoes spontaneous, Ca(2+)-dependent modulation when conducting Ca(2+). Nonselective cation channel probably playing a role in the regulation of membrane trafficking events. Acts as a Ca(2+)-permeable cation channel with inwardly rectifying activity. Mediates release of Ca(2+) from endosomes to the cytoplasm, contributes to endosomal acidification and is involved in the regulation of membrane trafficking and fusion in the endosomal pathway. Also permeable to Mg(2+), Na(+) and K(+). Does not seem to act as mechanosensory transduction channel in inner ear sensory hair cells. Proposed to play a critical role at the cochlear stereocilia ankle-link region during hair-bundle growth. Involved in the regulation of autophagy. Through association with GABARAPL2 may be involved in autophagosome formation possibly providing Ca(2+) for the fusion process. Through a possible and probably tissue-specific heteromerization with MCOLN1 may be at least in part involved in many lysosome-dependent cellular events. Possible heteromeric ion channel assemblies with TRPV5 show pharmacological similarity with TRPML3. This Callithrix jacchus (White-tufted-ear marmoset) protein is Mucolipin-3.